The chain runs to 131 residues: Profilin-5 (131 aa).

This sequence belongs to the profilin family. As to quaternary structure, occurs in many kinds of cells as a complex with monomeric actin in a 1:1 ratio.

Its subcellular location is the cytoplasm. The protein resides in the cytoskeleton. Functionally, binds to actin and affects the structure of the cytoskeleton. At high concentrations, profilin prevents the polymerization of actin, whereas it enhances it at low concentrations. By binding to PIP2, it inhibits the formation of IP3 and DG. The sequence is that of Profilin-5 from Hevea brasiliensis (Para rubber tree).